The primary structure comprises 126 residues: Holo-[acyl-carrier-protein] synthase (126 aa).

2 residues coordinate Mg(2+): aspartate 9 and glutamate 58.

It belongs to the P-Pant transferase superfamily. AcpS family. Mg(2+) serves as cofactor.

The protein resides in the cytoplasm. The catalysed reaction is apo-[ACP] + CoA = holo-[ACP] + adenosine 3',5'-bisphosphate + H(+). Functionally, transfers the 4'-phosphopantetheine moiety from coenzyme A to a Ser of acyl-carrier-protein. In Buchnera aphidicola subsp. Acyrthosiphon pisum (strain APS) (Acyrthosiphon pisum symbiotic bacterium), this protein is Holo-[acyl-carrier-protein] synthase.